Here is a 356-residue protein sequence, read N- to C-terminus: Homoserine O-acetyltransferase (356 aa).

In terms of domain architecture, AB hydrolase-1 spans 50 to 335 (NVILVCHALT…DEPYGHDAFL (286 aa)). The active-site Nucleophile is Ser-146. Arg-215 contacts substrate. Catalysis depends on residues Asp-302 and His-331. Asp-332 provides a ligand contact to substrate.

Belongs to the AB hydrolase superfamily. MetX family. Homodimer.

It is found in the cytoplasm. It catalyses the reaction L-homoserine + acetyl-CoA = O-acetyl-L-homoserine + CoA. It functions in the pathway amino-acid biosynthesis; L-methionine biosynthesis via de novo pathway; O-acetyl-L-homoserine from L-homoserine: step 1/1. In terms of biological role, transfers an acetyl group from acetyl-CoA to L-homoserine, forming acetyl-L-homoserine. This Chlorobaculum tepidum (strain ATCC 49652 / DSM 12025 / NBRC 103806 / TLS) (Chlorobium tepidum) protein is Homoserine O-acetyltransferase.